We begin with the raw amino-acid sequence, 287 residues long: Pyridoxal kinase PdxY (287 aa).

Residues serine 9 and 44-45 each bind substrate; that span reads MQ. ATP is bound by residues aspartate 111, alanine 142, glutamate 147, and lysine 180. Residue aspartate 221 participates in substrate binding.

The protein belongs to the pyridoxine kinase family. PdxY subfamily. In terms of assembly, homodimer. Mg(2+) serves as cofactor.

It catalyses the reaction pyridoxal + ATP = pyridoxal 5'-phosphate + ADP + H(+). It functions in the pathway cofactor metabolism; pyridoxal 5'-phosphate salvage; pyridoxal 5'-phosphate from pyridoxal: step 1/1. Functionally, pyridoxal kinase involved in the salvage pathway of pyridoxal 5'-phosphate (PLP). Catalyzes the phosphorylation of pyridoxal to PLP. The sequence is that of Pyridoxal kinase PdxY from Burkholderia mallei (strain ATCC 23344).